A 131-amino-acid polypeptide reads, in one-letter code: Small ribosomal subunit protein uS11 (131 aa).

It belongs to the universal ribosomal protein uS11 family. As to quaternary structure, part of the 30S ribosomal subunit. Interacts with proteins S7 and S18. Binds to IF-3.

Its function is as follows. Located on the platform of the 30S subunit, it bridges several disparate RNA helices of the 16S rRNA. Forms part of the Shine-Dalgarno cleft in the 70S ribosome. The protein is Small ribosomal subunit protein uS11 of Trichodesmium erythraeum (strain IMS101).